Consider the following 473-residue polypeptide: MKTLYSLRRSYPVETLFNGTIALAGRDQETTGFAWWAGNARLINLSGKLLGAHVAHAGLIVFWAGAMNLFEVAHFVPEKPMYEQGLILLPHLATLGWGVGPGGEIVDTFPYFVSGVLHLISSAVLGFGGIYHALIGPETLEESFPFFGYVWKDRNKMTTILGIHLILLGVGAFLPVLKALYFGGVYDTWAPGGGDVRKITNPTLNPSAIFGYLLKSPFGGEGWIVSVDNLEDVIGGHVWLGSICIFGGIWHILTKPFAWARRAFVWSGEAYLSYSLAALSLFGFIACCFVWFNNTVYPSEFYGPTGPEASQAQAFTFLVRDQRLGASVGSAQGPTGLGKYLMRSPTGEIIFGGETMRFWDLRAPWLEPLRGPNGLDLSKLRKDIQPWQERRSAEYMTHAPLGSLNSVGGVATEINAVNYVSPRSWLSTSHFVLGFFFFVGHLWHAGRARAAAAGFEKGIDRDFEPVLSMTPLN.

Residues 1-14 (MKTLYSLRRSYPVE) constitute a propeptide that is removed on maturation. At threonine 15 the chain carries N-acetylthreonine. The residue at position 15 (threonine 15) is a Phosphothreonine. The next 5 helical transmembrane spans lie at 69–93 (LFEV…PHLA), 134–155 (LIGP…KDRN), 178–200 (KALY…RKIT), 255–275 (KPFA…LSYS), and 291–312 (WFNN…ASQA). Glutamate 367 provides a ligand contact to [CaMn4O5] cluster. The chain crosses the membrane as a helical span at residues 447–471 (RARAAAAGFEKGIDRDFEPVLSMTP).

The protein belongs to the PsbB/PsbC family. PsbC subfamily. PSII is composed of 1 copy each of membrane proteins PsbA, PsbB, PsbC, PsbD, PsbE, PsbF, PsbH, PsbI, PsbJ, PsbK, PsbL, PsbM, PsbT, PsbX, PsbY, PsbZ, Psb30/Ycf12, at least 3 peripheral proteins of the oxygen-evolving complex and a large number of cofactors. It forms dimeric complexes. Binds multiple chlorophylls and provides some of the ligands for the Ca-4Mn-5O cluster of the oxygen-evolving complex. It may also provide a ligand for a Cl- that is required for oxygen evolution. PSII binds additional chlorophylls, carotenoids and specific lipids. is required as a cofactor.

Its subcellular location is the plastid. The protein localises to the chloroplast thylakoid membrane. One of the components of the core complex of photosystem II (PSII). It binds chlorophyll and helps catalyze the primary light-induced photochemical processes of PSII. PSII is a light-driven water:plastoquinone oxidoreductase, using light energy to abstract electrons from H(2)O, generating O(2) and a proton gradient subsequently used for ATP formation. This Pinus thunbergii (Japanese black pine) protein is Photosystem II CP43 reaction center protein.